Here is a 134-residue protein sequence, read N- to C-terminus: Prolactin (134 aa).

A disulfide bridge links C126 with C134.

Belongs to the somatotropin/prolactin family.

It is found in the secreted. The polypeptide is Prolactin (Bufo japonicus (Japanese common toad)).